Reading from the N-terminus, the 165-residue chain is Lipoprotein signal peptidase (165 aa).

3 helical membrane passes run 9 to 29 (LLTISFFVLIDWVTKLAVLLY), 69 to 89 (KYFLLLIRIVIILGILAFLFL), and 100 to 120 (FSLILLCSGAIGNVGDIFFYN). Active-site residues include aspartate 124 and aspartate 142. The helical transmembrane segment at 133-153 (WSFPTFNFADIFISLGTLIFV) threads the bilayer.

This sequence belongs to the peptidase A8 family.

Its subcellular location is the cell inner membrane. It carries out the reaction Release of signal peptides from bacterial membrane prolipoproteins. Hydrolyzes -Xaa-Yaa-Zaa-|-(S,diacylglyceryl)Cys-, in which Xaa is hydrophobic (preferably Leu), and Yaa (Ala or Ser) and Zaa (Gly or Ala) have small, neutral side chains.. Its pathway is protein modification; lipoprotein biosynthesis (signal peptide cleavage). In terms of biological role, this protein specifically catalyzes the removal of signal peptides from prolipoproteins. This Chlamydia felis (strain Fe/C-56) (Chlamydophila felis) protein is Lipoprotein signal peptidase.